The chain runs to 169 residues: Ribosome maturation factor RimM (169 aa).

Residues 91-167 enclose the PRC barrel domain; it reads EGEYYFADLI…RIVIATDFAH (77 aa).

Belongs to the RimM family. In terms of assembly, binds ribosomal protein uS19.

The protein resides in the cytoplasm. An accessory protein needed during the final step in the assembly of 30S ribosomal subunit, possibly for assembly of the head region. Essential for efficient processing of 16S rRNA. May be needed both before and after RbfA during the maturation of 16S rRNA. It has affinity for free ribosomal 30S subunits but not for 70S ribosomes. The polypeptide is Ribosome maturation factor RimM (Erythrobacter litoralis (strain HTCC2594)).